The primary structure comprises 390 residues: Putative RING-H2 finger protein ATL12 (390 aa).

The first 22 residues, 1-22, serve as a signal peptide directing secretion; the sequence is MNSPQEISILFFFIIFLDYVSA. The helical transmembrane segment at 41–61 threads the bilayer; it reads LAIITGVFSIVFTLTFVLLVY. The RING-type; atypical zinc finger occupies 124–166; sequence CSVCLSKFEDVEILRLLPKCRHAFHIGCIDQWLEQHATCPLCR.

The protein belongs to the RING-type zinc finger family. ATL subfamily.

Its subcellular location is the membrane. The enzyme catalyses S-ubiquitinyl-[E2 ubiquitin-conjugating enzyme]-L-cysteine + [acceptor protein]-L-lysine = [E2 ubiquitin-conjugating enzyme]-L-cysteine + N(6)-ubiquitinyl-[acceptor protein]-L-lysine.. Its pathway is protein modification; protein ubiquitination. This chain is Putative RING-H2 finger protein ATL12 (ATL12), found in Arabidopsis thaliana (Mouse-ear cress).